We begin with the raw amino-acid sequence, 301 residues long: Hydroxymycolate synthase MmaA4 (301 aa).

S-adenosyl-L-methionine-binding positions include 42-43 (YS), 81-83 (GCG), 103-108 (TLSKNQ), 132-133 (WE), and isoleucine 145. Cysteine 278 is a catalytic residue.

The protein belongs to the CFA/CMAS family. As to quaternary structure, monomer.

Its pathway is lipid metabolism; mycolic acid biosynthesis. In terms of biological role, involved in the biosynthesis of hydroxymycolate, a common precursor of oxygenated mycolic acids (methoxymycolate and ketomycolate). Probably transfers a methyl group from the S-adenosylmethionine (SAM) cofactor and, subsequently or simultaneously, a water molecule onto the double bound of ethylene substrates, leading to the formation of the hydroxylated product at the distal position. The polypeptide is Hydroxymycolate synthase MmaA4 (cmaA) (Mycobacterium bovis (strain ATCC BAA-935 / AF2122/97)).